The primary structure comprises 297 residues: Formamidopyrimidine-DNA glycosylase (297 aa).

The Schiff-base intermediate with DNA role is filled by P2. E3 serves as the catalytic Proton donor. K58 acts as the Proton donor; for beta-elimination activity in catalysis. Positions 106, 125, and 168 each coordinate DNA. The FPG-type zinc-finger motif lies at 259 to 295 (RVYDREGLACTARGCRGVVRRVVQSGRSTFFCEVCQP). R285 (proton donor; for delta-elimination activity) is an active-site residue.

It belongs to the FPG family. Monomer. Zn(2+) serves as cofactor.

The catalysed reaction is Hydrolysis of DNA containing ring-opened 7-methylguanine residues, releasing 2,6-diamino-4-hydroxy-5-(N-methyl)formamidopyrimidine.. It catalyses the reaction 2'-deoxyribonucleotide-(2'-deoxyribose 5'-phosphate)-2'-deoxyribonucleotide-DNA = a 3'-end 2'-deoxyribonucleotide-(2,3-dehydro-2,3-deoxyribose 5'-phosphate)-DNA + a 5'-end 5'-phospho-2'-deoxyribonucleoside-DNA + H(+). Its function is as follows. Involved in base excision repair of DNA damaged by oxidation or by mutagenic agents. Acts as a DNA glycosylase that recognizes and removes damaged bases. Has a preference for oxidized purines, such as 7,8-dihydro-8-oxoguanine (8-oxoG). Has AP (apurinic/apyrimidinic) lyase activity and introduces nicks in the DNA strand. Cleaves the DNA backbone by beta-delta elimination to generate a single-strand break at the site of the removed base with both 3'- and 5'-phosphates. The protein is Formamidopyrimidine-DNA glycosylase of Methylobacterium nodulans (strain LMG 21967 / CNCM I-2342 / ORS 2060).